A 228-amino-acid polypeptide reads, in one-letter code: Transcription factor zip-11 (228 aa).

The interval 166–202 is basic motif; the sequence is RKRQQNKVAAARYRDKQKAKWQDLLDQLEAEEDRNQR. One can recognise a bZIP domain in the interval 166–224; the sequence is RKRQQNKVAAARYRDKQKAKWQDLLDQLEAEEDRNQRLKLQAGHLEKEVAEMRQAFLAK. The tract at residues 203–210 is leucine-zipper; sequence LKLQAGHL.

Belongs to the bZIP family. In terms of assembly, interacts with CCAAT/enhancer-binding protein cebp-2.

It is found in the nucleus. Functionally, transcription factor. Involved in modulating innate immune response pathways, acting to promote resistance against infection by Gram-negative bacterium P.aeruginosa strain PA14. May act as part of a feedback regulatory loop with the pmk-1/p38 MAPK pathway. May also function in concert with CCAAT/enhancer-binding protein cebp-2 to mediate immune responses, independently of the pmk-1/p38 MAPK pathway. This chain is Transcription factor zip-11, found in Caenorhabditis elegans.